The primary structure comprises 479 residues: Sulfate adenylyltransferase subunit 1 (479 aa).

In terms of domain architecture, tr-type G spans 25–239 (KSLLRFLTCG…EVLETVDIQR (215 aa)). Positions 34–41 (GSVDDGKS) are G1. 34–41 (GSVDDGKS) is a GTP binding site. The segment at 92–96 (GITID) is G2. Positions 113 to 116 (DTPG) are G3. Residues 113 to 117 (DTPGH) and 168 to 171 (NKMD) contribute to the GTP site. The segment at 168–171 (NKMD) is G4. Positions 206–208 (SAL) are G5.

The protein belongs to the TRAFAC class translation factor GTPase superfamily. Classic translation factor GTPase family. CysN/NodQ subfamily. Heterodimer composed of CysD, the smaller subunit, and CysN.

It catalyses the reaction sulfate + ATP + H(+) = adenosine 5'-phosphosulfate + diphosphate. It functions in the pathway sulfur metabolism; hydrogen sulfide biosynthesis; sulfite from sulfate: step 1/3. Its function is as follows. With CysD forms the ATP sulfurylase (ATPS) that catalyzes the adenylation of sulfate producing adenosine 5'-phosphosulfate (APS) and diphosphate, the first enzymatic step in sulfur assimilation pathway. APS synthesis involves the formation of a high-energy phosphoric-sulfuric acid anhydride bond driven by GTP hydrolysis by CysN coupled to ATP hydrolysis by CysD. The protein is Sulfate adenylyltransferase subunit 1 of Salmonella gallinarum (strain 287/91 / NCTC 13346).